The following is a 1016-amino-acid chain: Mediator of RNA polymerase II transcription subunit 5 (1016 aa).

Belongs to the Mediator complex subunit 5 family. As to quaternary structure, component of the Mediator complex.

The protein localises to the nucleus. In terms of biological role, component of the Mediator complex, a coactivator involved in the regulated transcription of nearly all RNA polymerase II-dependent genes. Mediator functions as a bridge to convey information from gene-specific regulatory proteins to the basal RNA polymerase II transcription machinery. Mediator is recruited to promoters by direct interactions with regulatory proteins and serves as a scaffold for the assembly of a functional preinitiation complex with RNA polymerase II and the general transcription factors. The sequence is that of Mediator of RNA polymerase II transcription subunit 5 (nut1) from Aspergillus terreus (strain NIH 2624 / FGSC A1156).